Reading from the N-terminus, the 467-residue chain is tRNA-2-methylthio-N(6)-dimethylallyladenosine synthase (467 aa).

The MTTase N-terminal domain maps to 22 to 138 (GSYWITTFGC…LETLLNKVET (117 aa)). [4Fe-4S] cluster contacts are provided by C31, C67, C101, C173, C177, and C180. Positions 159 to 396 (RDSSICAWVN…NSLVEIKAKE (238 aa)) constitute a Radical SAM core domain. The TRAM domain maps to 399-467 (VRYKDRVEEV…AFSLSGVIEN (69 aa)).

This sequence belongs to the methylthiotransferase family. MiaB subfamily. Monomer. Requires [4Fe-4S] cluster as cofactor.

The protein resides in the cytoplasm. The catalysed reaction is N(6)-dimethylallyladenosine(37) in tRNA + (sulfur carrier)-SH + AH2 + 2 S-adenosyl-L-methionine = 2-methylsulfanyl-N(6)-dimethylallyladenosine(37) in tRNA + (sulfur carrier)-H + 5'-deoxyadenosine + L-methionine + A + S-adenosyl-L-homocysteine + 2 H(+). In terms of biological role, catalyzes the methylthiolation of N6-(dimethylallyl)adenosine (i(6)A), leading to the formation of 2-methylthio-N6-(dimethylallyl)adenosine (ms(2)i(6)A) at position 37 in tRNAs that read codons beginning with uridine. In Prochlorococcus marinus (strain MIT 9211), this protein is tRNA-2-methylthio-N(6)-dimethylallyladenosine synthase.